We begin with the raw amino-acid sequence, 90 residues long: Small ribosomal subunit protein bS18B (90 aa).

Belongs to the bacterial ribosomal protein bS18 family. As to quaternary structure, part of the 30S ribosomal subunit. Forms a tight heterodimer with protein bS6.

In terms of biological role, binds as a heterodimer with protein bS6 to the central domain of the 16S rRNA, where it helps stabilize the platform of the 30S subunit. The protein is Small ribosomal subunit protein bS18B of Roseiflexus sp. (strain RS-1).